The primary structure comprises 57 residues: Large ribosomal subunit protein eL20 (57 aa).

Polar residues predominate over residues M1 to F10. The tract at residues M1–K21 is disordered.

This sequence belongs to the eukaryotic ribosomal protein eL20 family. As to quaternary structure, part of the 50S ribosomal subunit. Binds 23S rRNA.

The chain is Large ribosomal subunit protein eL20 from Halomicrobium mukohataei (strain ATCC 700874 / DSM 12286 / JCM 9738 / NCIMB 13541) (Haloarcula mukohataei).